The chain runs to 628 residues: Probable alpha-L-arabinofuranosidase A (628 aa).

Positions methionine 1–glycine 25 are cleaved as a signal peptide. Residues asparagine 36, asparagine 51, asparagine 74, asparagine 152, asparagine 164, asparagine 260, asparagine 359, asparagine 404, and asparagine 493 are each glycosylated (N-linked (GlcNAc...) asparagine).

This sequence belongs to the glycosyl hydrolase 51 family.

It localises to the secreted. The catalysed reaction is Hydrolysis of terminal non-reducing alpha-L-arabinofuranoside residues in alpha-L-arabinosides.. It functions in the pathway glycan metabolism; L-arabinan degradation. In terms of biological role, alpha-L-arabinofuranosidase involved in the degradation of arabinoxylan, a major component of plant hemicellulose. Acts only on small linear 1,5-alpha-linked L-arabinofuranosyl oligosaccharides. This chain is Probable alpha-L-arabinofuranosidase A (abfA), found in Aspergillus terreus (strain NIH 2624 / FGSC A1156).